Consider the following 435-residue polypeptide: Diguanylate cyclase TpbB (435 aa).

Residues 1-22 (MNRRRRYTGSNPSLRRVLYRAH) lie on the Cytoplasmic side of the membrane. The helical transmembrane segment at 23–43 (LGVALVAVFTAGLAVTLVGLL) threads the bilayer. Over 44-154 (TLRAYADPNQ…VKGSGGSLLR (111 aa)) the chain is Periplasmic. Residues 155–175 (FLLTGFAGMVLCLLLTALGAF) form a helical membrane-spanning segment. Topologically, residues 176–435 (YLSRRLVRGI…DSATPEAPPK (260 aa)) are cytoplasmic. The HAMP domain occupies 183 to 236 (RGIVGPLDQLAKVAHTVRRERDFEKRVPEAGIAELSQLGEDFNALLDELESWQA). A GGDEF domain is found at 279–415 (EQLAVLFIDS…GSRRLAELND (137 aa)). Mg(2+) contacts are provided by serine 288 and aspartate 330. Residue aspartate 330 is the Proton acceptor of the active site. A compositionally biased stretch (basic and acidic residues) spans 414–426 (NDPRILQEEKEID). Residues 414–435 (NDPRILQEEKEIDSATPEAPPK) form a disordered region.

The cofactor is Mg(2+). Phosphorylated at both Tyr residues and Ser/Thr residues. Dephosphorylated and inactivated by TpbA.

The protein resides in the cell inner membrane. It catalyses the reaction 2 GTP = 3',3'-c-di-GMP + 2 diphosphate. Its pathway is purine metabolism; 3',5'-cyclic di-GMP biosynthesis. Activity is tightly controlled by YfiR, a small periplasmic protein, and the OmpA/Pal-like outer-membrane lipoprotein YfiB. Diguanylate cyclase activity is inhibited by the specific interaction of YfiR with the TpbB periplasmic domain and is activated by YfiB, which releases the YfiR-mediated repression through sequestration of YfiR to the outer membrane. Activity is also controlled by dephosphorylation of the periplasmic domain by the tyrosine phosphatase TpbA. In terms of biological role, catalyzes the synthesis of cyclic-di-GMP (c-di-GMP) via the condensation of 2 GTP molecules. Important for the regulation of biofilm maintenance when exposed to peroxide. Its function is as follows. Part of the YfiB-TpbB-YfiR (or yfiBNR) system, encoding a tripartite signaling module that modulates intracellular c-di-GMP levels. The system is a key regulator of the small colony variant (SCV) phenotype, and plays an important role in biofilm formation and in vivo persistence. The c-di-GMP produced by TpbB/YfiN stimulates the production of the Pel and Psl exopolysaccharides, which promotes surface attachment, generates an SCV phenotype and confers resistance against phagocytosis. The chain is Diguanylate cyclase TpbB from Pseudomonas aeruginosa (strain UCBPP-PA14).